The sequence spans 641 residues: MASTRRPFGPPRSGFDLRDMFLDSSRMEEIRNLQARSLGQVTPGQSRILKRNQTMDEKYLMPKEEAMAGRGVSLGLRPPTISSKTRASEALRKLAQIETKILNRKQVPMAWSDVESDSTSIEQSLPKRTGAASVSSQYPHRTFQKQVNKTCVSKSDGPSGNGSRFLKKKELPTEARSPGLAVGTGKQALLPTKKESASDEEEEMLLLRSLMESSREKEANRNQELPGSSVSRSNLGKVFLDPTPDQPGVLSLLSVDQSSLKSPRPIQSTRVGLRTHSRQASSAGDTVSITASPPILDDFSKSASSKMGCIKLASSPSRTELESSEEPVSEAAADSLHDFRINILSIDDLVLADGDKSDGDQREEDCVREGISVRSSSPTSPTRLEAQMWPKNCVFQGTATVVGDGEGLTTESDVSEPPGTSSSAAVQSHSMSRALTASPAYSEDFEQFSGPLALEESLDRTLDTLSKFSSSGQTDIVARQPLSRTEWGRGVTRVVKETAVQTLDPAFAYQWSKAGGIAAVGPALGGAYVDPAPIASHIVSADAIEALTAYSPAVLALNDMLKQQLSLTQQFIEASHQLHGSLLQSLDGDSFHYHTLEEAKEYIRCHRPAPLTMEAALQEVREELQVPASEACLGTCPPRNQ.

A Phosphoserine modification is found at Ser112. 4 disordered regions span residues 118-243, 261-289, 355-386, and 404-430; these read STSI…LDPT, KSPR…TVSI, DKSD…RLEA, and DGEG…QSHS. Over residues 132–162 the composition is skewed to polar residues; the sequence is ASVSSQYPHRTFQKQVNKTCVSKSDGPSGNG. Ser198 is subject to Phosphoserine. Polar residues-rich tracts occupy residues 222-234 and 278-289; these read NQEL…SRSN and RQASSAGDTVSI. Residues 355 to 368 are compositionally biased toward basic and acidic residues; the sequence is DKSDGDQREEDCVR. Low complexity-rich tracts occupy residues 374 to 383 and 421 to 430; these read RSSSPTSPTR and SSSAAVQSHS.

This is an uncharacterized protein from Mus musculus (Mouse).